A 922-amino-acid chain; its full sequence is Isoleucine--tRNA ligase (922 aa).

Positions 58–68 (PYANGDIHIGH) match the 'HIGH' region motif. E552 contributes to the L-isoleucyl-5'-AMP binding site. The 'KMSKS' region motif lies at 593-597 (KMSKS). K596 contacts ATP. C885, C888, C905, and C908 together coordinate Zn(2+).

The protein belongs to the class-I aminoacyl-tRNA synthetase family. IleS type 1 subfamily. In terms of assembly, monomer. The cofactor is Zn(2+).

The protein localises to the cytoplasm. It catalyses the reaction tRNA(Ile) + L-isoleucine + ATP = L-isoleucyl-tRNA(Ile) + AMP + diphosphate. In terms of biological role, catalyzes the attachment of isoleucine to tRNA(Ile). As IleRS can inadvertently accommodate and process structurally similar amino acids such as valine, to avoid such errors it has two additional distinct tRNA(Ile)-dependent editing activities. One activity is designated as 'pretransfer' editing and involves the hydrolysis of activated Val-AMP. The other activity is designated 'posttransfer' editing and involves deacylation of mischarged Val-tRNA(Ile). This Ruthia magnifica subsp. Calyptogena magnifica protein is Isoleucine--tRNA ligase.